The following is a 521-amino-acid chain: 7-deoxyloganic acid hydroxylase (521 aa).

A helical transmembrane segment spans residues 8-28 (IIFLVFVSLTLYWVYRILDWV). Asn107 and Asn311 each carry an N-linked (GlcNAc...) asparagine glycan. Cys469 is a binding site for heme.

It belongs to the cytochrome P450 family. As to expression, mostly present in actively growing aerial organs, including leaves, flower buds and stems, and, to a lower extent, in mature leaves, roots and opened flowers. Expressed in the leaf internal phloem-associated parenchyma (IPAP) inside the mesophyll.

It localises to the endoplasmic reticulum membrane. The catalysed reaction is 7-deoxyloganate + reduced [NADPH--hemoprotein reductase] + O2 = loganate + oxidized [NADPH--hemoprotein reductase] + H2O + H(+). It participates in alkaloid biosynthesis. Functionally, component of the seco-iridoid and derivatives monoterpenoid indole alkaloids (MIAs, e.g. vincristine, quinine, and strychnine) biosynthesis pathway. Catalyzes the conversion of 7-deoxyloganic acid into loganic acid. Not active on 7-deoxyloganetic acid. The chain is 7-deoxyloganic acid hydroxylase from Catharanthus roseus (Madagascar periwinkle).